An 89-amino-acid polypeptide reads, in one-letter code: Small ribosomal subunit protein uS15 (89 aa).

It belongs to the universal ribosomal protein uS15 family. In terms of assembly, part of the 30S ribosomal subunit. Forms a bridge to the 50S subunit in the 70S ribosome, contacting the 23S rRNA.

One of the primary rRNA binding proteins, it binds directly to 16S rRNA where it helps nucleate assembly of the platform of the 30S subunit by binding and bridging several RNA helices of the 16S rRNA. In terms of biological role, forms an intersubunit bridge (bridge B4) with the 23S rRNA of the 50S subunit in the ribosome. The protein is Small ribosomal subunit protein uS15 of Streptococcus pyogenes serotype M2 (strain MGAS10270).